The chain runs to 216 residues: Cell division protein SepF (216 aa).

The segment at 22 to 126 is disordered; that stretch reads EYVEEPDQAR…PVVDDGGPLA (105 aa). 3 stretches are compositionally biased toward basic and acidic residues: residues 28–50, 62–80, and 106–118; these read DQARRAPRRSHDGYAERDDREFV, SRRDEEDAEFDRYDSRPRV, and ARAERPEARRAPV.

Belongs to the SepF family. As to quaternary structure, homodimer. Interacts with FtsZ.

Its subcellular location is the cytoplasm. Cell division protein that is part of the divisome complex and is recruited early to the Z-ring. Probably stimulates Z-ring formation, perhaps through the cross-linking of FtsZ protofilaments. Its function overlaps with FtsA. In Rhodococcus erythropolis (strain PR4 / NBRC 100887), this protein is Cell division protein SepF.